Reading from the N-terminus, the 356-residue chain is Tyrosine recombinase XerS (356 aa).

A Core-binding (CB) domain is found at Ile16 to Thr121. The region spanning Ala169–Asp354 is the Tyr recombinase domain. Active-site residues include Arg210, Lys234, His306, Arg309, and His332. Tyr341 acts as the O-(3'-phospho-DNA)-tyrosine intermediate in catalysis.

Belongs to the 'phage' integrase family. XerS subfamily.

The protein resides in the cytoplasm. Its activity is regulated as follows. FtsK is required for recombination. In terms of biological role, site-specific tyrosine recombinase, which acts by catalyzing the cutting and rejoining of the recombining DNA molecules. Essential to convert dimers of the bacterial chromosome into monomers to permit their segregation at cell division. The sequence is that of Tyrosine recombinase XerS from Streptococcus pyogenes serotype M6 (strain ATCC BAA-946 / MGAS10394).